The following is a 71-amino-acid chain: UPF0337 protein RPA4418 (71 aa).

The tract at residues 1–54 (MGSTMDKIKGQANELAGKAKQGIGEATGSDKLKGEGAIQEAKGHGQQALGNAKD) is disordered.

This sequence belongs to the UPF0337 (CsbD) family.

The protein is UPF0337 protein RPA4418 of Rhodopseudomonas palustris (strain ATCC BAA-98 / CGA009).